The sequence spans 353 residues: Quinolinate synthase (353 aa).

The iminosuccinate site is built by His49 and Ser70. Cys115 is a binding site for [4Fe-4S] cluster. Iminosuccinate-binding positions include 141–143 (YAN) and Ser158. Cys202 contacts [4Fe-4S] cluster. Residues 228–230 (HPE) and Thr245 contribute to the iminosuccinate site. [4Fe-4S] cluster is bound at residue Cys299.

Belongs to the quinolinate synthase family. Type 1 subfamily. [4Fe-4S] cluster is required as a cofactor.

The protein resides in the cytoplasm. It carries out the reaction iminosuccinate + dihydroxyacetone phosphate = quinolinate + phosphate + 2 H2O + H(+). It functions in the pathway cofactor biosynthesis; NAD(+) biosynthesis; quinolinate from iminoaspartate: step 1/1. Functionally, catalyzes the condensation of iminoaspartate with dihydroxyacetone phosphate to form quinolinate. In Marinobacter nauticus (strain ATCC 700491 / DSM 11845 / VT8) (Marinobacter aquaeolei), this protein is Quinolinate synthase.